A 739-amino-acid polypeptide reads, in one-letter code: uncharacterized protein (739 aa).

8 helical membrane-spanning segments follow: residues 53-73, 90-110, 114-134, 178-198, 421-441, 457-477, 491-511, and 532-552; these read LALGIALWMELGSPQWAALTV, WHLFGMVVGVISGITLVAAIP, LMFILLLAVGIGTFCMIGTFM, TYILLGIVLEASISGLFQLGL, LIWICTAWPSGLTFIMFVCIV, AFLRGACCAVVAAGILNLALM, GLAMMIGGLAFAYPPLTLPAV, and IVYFNTALPLVLGLLYASWMY.

Belongs to the aromatic acid exporter ArAE (TC 2.A.85) family.

The protein resides in the cell membrane. This is an uncharacterized protein from Gluconobacter oxydans (strain 621H) (Gluconobacter suboxydans).